Consider the following 529-residue polypeptide: Bifunctional purine biosynthesis protein PurH (529 aa).

Positions M1 to V148 constitute an MGS-like domain.

It belongs to the PurH family.

It catalyses the reaction (6R)-10-formyltetrahydrofolate + 5-amino-1-(5-phospho-beta-D-ribosyl)imidazole-4-carboxamide = 5-formamido-1-(5-phospho-D-ribosyl)imidazole-4-carboxamide + (6S)-5,6,7,8-tetrahydrofolate. It carries out the reaction IMP + H2O = 5-formamido-1-(5-phospho-D-ribosyl)imidazole-4-carboxamide. It functions in the pathway purine metabolism; IMP biosynthesis via de novo pathway; 5-formamido-1-(5-phospho-D-ribosyl)imidazole-4-carboxamide from 5-amino-1-(5-phospho-D-ribosyl)imidazole-4-carboxamide (10-formyl THF route): step 1/1. It participates in purine metabolism; IMP biosynthesis via de novo pathway; IMP from 5-formamido-1-(5-phospho-D-ribosyl)imidazole-4-carboxamide: step 1/1. This is Bifunctional purine biosynthesis protein PurH from Citrobacter koseri (strain ATCC BAA-895 / CDC 4225-83 / SGSC4696).